A 302-amino-acid polypeptide reads, in one-letter code: Citrate lyase subunit beta (302 aa).

Positions 69 and 132 each coordinate substrate. Mg(2+) contacts are provided by Glu132 and Asp159.

Belongs to the HpcH/HpaI aldolase family. Citrate lyase beta subunit subfamily. As to quaternary structure, oligomer with a subunit composition of (alpha,beta,gamma)6. The cofactor is Mg(2+).

Its subcellular location is the cytoplasm. The enzyme catalyses citrate = oxaloacetate + acetate. The catalysed reaction is (3S)-citryl-CoA = oxaloacetate + acetyl-CoA. Represents a citryl-ACP lyase. The chain is Citrate lyase subunit beta (citE) from Leuconostoc mesenteroides subsp. cremoris.